Consider the following 281-residue polypeptide: ATP synthase subunit a (281 aa).

7 helical membrane passes run 56 to 76 (KPML…WAAF), 117 to 137 (LVVS…IPVA), 144 to 164 (IIAY…TLTF), 181 to 201 (KSLG…NILI), 215 to 235 (FAGH…LNGV), 237 to 257 (IAYA…ELFI), and 259 to 279 (ALQA…AMAE).

This sequence belongs to the ATPase A chain family. In terms of assembly, F-type ATPases have 2 components, CF(1) - the catalytic core - and CF(0) - the membrane proton channel. CF(1) has five subunits: alpha(3), beta(3), gamma(1), delta(1), epsilon(1). CF(0) has three main subunits: a(1), b(2) and c(9-12). The alpha and beta chains form an alternating ring which encloses part of the gamma chain. CF(1) is attached to CF(0) by a central stalk formed by the gamma and epsilon chains, while a peripheral stalk is formed by the delta and b chains.

The protein resides in the cell membrane. Functionally, key component of the proton channel; it plays a direct role in the translocation of protons across the membrane. This chain is ATP synthase subunit a, found in Streptomyces lividans.